A 322-amino-acid polypeptide reads, in one-letter code: Adenine deaminase (322 aa).

Residues histidine 11, histidine 13, and histidine 189 each contribute to the Zn(2+) site. Glutamate 192 (proton donor) is an active-site residue. Aspartate 270 contacts Zn(2+). A substrate-binding site is contributed by aspartate 271.

The protein belongs to the metallo-dependent hydrolases superfamily. Adenosine and AMP deaminases family. Adenine deaminase type 2 subfamily. The cofactor is Zn(2+).

It catalyses the reaction adenine + H2O + H(+) = hypoxanthine + NH4(+). In terms of biological role, catalyzes the hydrolytic deamination of adenine to hypoxanthine. Plays an important role in the purine salvage pathway and in nitrogen catabolism. The protein is Adenine deaminase of Rhizobium rhizogenes (strain K84 / ATCC BAA-868) (Agrobacterium radiobacter).